The sequence spans 244 residues: GTP cyclohydrolase 1 type 2 homolog (244 aa).

Residues H65, H66, D102, H216, and E220 each coordinate a divalent metal cation.

Belongs to the GTP cyclohydrolase I type 2/NIF3 family. As to quaternary structure, homohexamer; trimer of dimers, that forms a hollow cage-like architecture.

DNA-binding protein exhibiting the ability to bind to both single-stranded and double-stranded DNA. This chain is GTP cyclohydrolase 1 type 2 homolog, found in Methanocaldococcus jannaschii (strain ATCC 43067 / DSM 2661 / JAL-1 / JCM 10045 / NBRC 100440) (Methanococcus jannaschii).